Here is a 675-residue protein sequence, read N- to C-terminus: MGSNQDFRNLQAKFQTSQPELGELFRKTPKPELNKVLKKFPQTELSEQPKKSSQSELSAVSLKPLQLQFADLPRKPPQPGVLKKSPQPEFPHLANKPVQAEFPRKPLHPEFTGLKKPSQAEFTDLKKPPQPQFASLPKKPPKPEFGELSKRPPQLETPQEPSAPPAQKLLKPEPNNPARPLGELKPKMFWHLEANEAPKRPLPSESSTFPKKPLQPEAVVGFSRKSQPQSESIEVSQTSPSKCGSRELDSHSPQPDISTFPKNNENFRKPSYPQATGCPKSPKQPMFYEFPQTPPRKPESCNPQSHSPLPDFNAFPKKHPQLQPSDLTRASSEPEVCKVPKKTQKPDPNVLSQKPSQPELGHLPRTSSDPEFNSLPRKFLQPQHGKFFQPEFPKGLPRKPKLPGSVSECSLPSASAGSSPQCPLSPGLIVPGIPRWRSEDFQVQRPPRRRPLPSASSLGHPPAKPALPPGPINIQSFRRAAATAAAVLKTGSSTGTHFQAQQPQHIAQNPDEIYELYDAVEATDDSSISPRGRDEMLSTQQATRWPQQEPELRKKATQPQQLPATDPKLLKQIRKAEKAEREFRKKFKFEGEIVIHTKMMIDPNAKTRRGGGKHLGIRRGEILEVIEFTSKDEMLCRDPKGKYGYVPRTALLPLETEVYDDVSFGDPLDMQPFPR.

The span at 1–19 (MGSNQDFRNLQAKFQTSQP) shows a compositional bias: polar residues. 2 disordered regions span residues 1–473 (MGSN…GPIN) and 523–562 (TDDSSISPRGRDEMLSTQQATRWPQQEPELRKKATQPQQL). Basic and acidic residues predominate over residues 23–35 (ELFRKTPKPELNK). The span at 43–58 (TELSEQPKKSSQSELS) shows a compositional bias: polar residues. Over residues 141–150 (PKPEFGELSK) the composition is skewed to basic and acidic residues. Composition is skewed to polar residues over residues 224–242 (RKSQPQSESIEVSQTSPSK), 251–264 (HSPQPDISTFPKNN), and 322–331 (LQPSDLTRAS). Phosphoserine is present on Ser-374. Polar residues predominate over residues 407–422 (SECSLPSASAGSSPQC). Pro residues predominate over residues 462 to 471 (PAKPALPPGP). Residues 537–546 (LSTQQATRWP) show a composition bias toward polar residues. The SH3 domain occupies 578 to 656 (KAEREFRKKF…PRTALLPLET (79 aa)).

As to quaternary structure, interacts with SKAP2, LCP2 and DBNL. May interact with LYN. Interacts with NEK6. May be phosphorylated on tyrosines. As to expression, expressed in bone marrow and mature neutrophils. Weakly expressed in macrophages and mast cells.

May be involved in integrin signaling in neutrophils. Binds to PtdIns(4)P. This Mus musculus (Mouse) protein is PML-RARA-regulated adapter molecule 1 (Pram1).